A 167-amino-acid chain; its full sequence is MSKETPSEDDSRHRIVAVTLDEDSIGRSGPDIEHERAIAIYDLVEKNLFAPEGAEGGPFTLHIAITGNRLMFDIRREDGAPVVTHLLSLTPFRRIVKDYFMICDSYYQAIRTATPDKIEAIDMGRRGIHDEGSRTLQERLNGKVHVDFETARRLFTLISVLHWKGNA.

This sequence belongs to the UPF0262 family.

The polypeptide is UPF0262 protein Nwi_0248 (Nitrobacter winogradskyi (strain ATCC 25391 / DSM 10237 / CIP 104748 / NCIMB 11846 / Nb-255)).